A 455-amino-acid chain; its full sequence is ATP-dependent protease ATPase subunit HslU (455 aa).

ATP is bound by residues Ile19 and 61 to 66 (GVGKTE). Positions 144–163 (ESKVGFANEPAEDAASKKEK) are disordered. Residues Asp268, Glu333, and Arg405 each coordinate ATP.

It belongs to the ClpX chaperone family. HslU subfamily. In terms of assembly, a double ring-shaped homohexamer of HslV is capped on each side by a ring-shaped HslU homohexamer. The assembly of the HslU/HslV complex is dependent on binding of ATP.

The protein resides in the cytoplasm. Its function is as follows. ATPase subunit of a proteasome-like degradation complex; this subunit has chaperone activity. The binding of ATP and its subsequent hydrolysis by HslU are essential for unfolding of protein substrates subsequently hydrolyzed by HslV. HslU recognizes the N-terminal part of its protein substrates and unfolds these before they are guided to HslV for hydrolysis. The sequence is that of ATP-dependent protease ATPase subunit HslU from Francisella tularensis subsp. holarctica (strain FTNF002-00 / FTA).